Consider the following 176-residue polypeptide: Probable DNA-directed RNA polymerase subunit delta (176 aa).

Residues 14-81 (CSMIEVVHSV…GENRWGLRSW (68 aa)) enclose the HTH HARE-type domain. The segment at 91–176 (ILPQPKPKKK…ETEEEEEEEL (86 aa)) is disordered. The span at 106–176 (DGFDDYIEED…ETEEEEEEEL (71 aa)) shows a compositional bias: acidic residues.

The protein belongs to the RpoE family. RNAP is composed of a core of 2 alpha, a beta and a beta' subunits. The core is associated with a delta subunit and one of several sigma factors.

Its function is as follows. Participates in both the initiation and recycling phases of transcription. In the presence of the delta subunit, RNAP displays an increased specificity of transcription, a decreased affinity for nucleic acids, and an increased efficiency of RNA synthesis because of enhanced recycling. The sequence is that of Probable DNA-directed RNA polymerase subunit delta from Bacillus thuringiensis (strain Al Hakam).